A 243-amino-acid polypeptide reads, in one-letter code: Venom peptide isomerase heavy chain (243 aa).

In terms of domain architecture, Peptidase S1 spans 1–243; it reads IVGGKTAKFG…YTNWMSKNMV (243 aa). Cysteine 31 and cysteine 47 are oxidised to a cystine. Active-site charge relay system residues include histidine 46 and aspartate 96. Asparagine 127 is a glycosylation site (N-linked (GlcNAc...) asparagine). 2 cysteine pairs are disulfide-bonded: cysteine 159–cysteine 181 and cysteine 190–cysteine 219. Serine 194 (charge relay system) is an active-site residue.

The protein belongs to the peptidase S1 family. Heterodimer with venom peptide isomerase light chain; disulfide-linked. Post-translationally, N-linked glycan at Asn-127 consists of Man3-GlcNAc2-Fuc. As to expression, expressed by the venom gland.

The protein resides in the secreted. In terms of biological role, peptide isomerase that inverts the chirality at the Ser-81 of omega-Aga IVB. Acts cofactor-independently. This chain is Venom peptide isomerase heavy chain, found in Agelenopsis aperta (North American funnel-web spider).